A 125-amino-acid polypeptide reads, in one-letter code: Small ribosomal subunit protein uS12m (125 aa).

Positions 1–26 are disordered; it reads MPTINQLLRKKSSRQAPKLKSKKPAL. The segment covering 8-23 has biased composition (basic residues); that stretch reads LRKKSSRQAPKLKSKK.

It belongs to the universal ribosomal protein uS12 family.

Its subcellular location is the mitochondrion. The protein is Small ribosomal subunit protein uS12m (RPS12) of Prototheca wickerhamii.